Reading from the N-terminus, the 752-residue chain is Probable cell surface ferric reductase kap2 (752 aa).

A helical transmembrane segment spans residues 40-60 (GKYGLGWVYFSVILLAISTII). 2 N-linked (GlcNAc...) asparagine glycosylation sites follow: N118 and N133. Helical transmembrane passes span 157–177 (IGFPSLGASSIILAALIFVTL) and 195–215 (PPLAIRAGMIAVAMIPWIIAL). Residues 201–348 (AGMIAVAMIP…WATVAIWMLS (148 aa)) form the Ferric oxidoreductase domain. Heme-binding residues include H237 and H251. Transmembrane regions (helical) follow at residues 241-261 (GYLCLFLSLIHMVPFYVTPIW), 281-301 (GTGWAALVPLIVLCLHSLPIL), and 306-326 (YELFKLVHLPLSIIFLAMIFW). 2 residues coordinate heme: H313 and H327. Residues 331 to 351 (FLASWDYLWATVAIWMLSYAV) traverse the membrane as a helical segment. Positions 349 to 475 (YAVRLFYVNW…EGPYGGMKRD (127 aa)) constitute an FAD-binding FR-type domain. N-linked (GlcNAc...) asparagine glycosylation occurs at N357. Residue 467–470 (GPYG) coordinates NADP(+). Residues 482 to 502 (VVFFAGGSGITATASHLLNLI) traverse the membrane as a helical segment. N627 is a glycosylation site (N-linked (GlcNAc...) asparagine). 714–715 (CG) is a binding site for NADP(+).

This sequence belongs to the ferric reductase (FRE) family. It depends on FAD as a cofactor. The cofactor is heme.

It is found in the cell membrane. The enzyme catalyses 2 a Fe(II)-siderophore + NADP(+) + H(+) = 2 a Fe(III)-siderophore + NADPH. Its function is as follows. Probable cell surface ferric reductase that acts as a negative regulatory factor of growth and development. Involved in kojic acid production through the regulation of kojA expression. The protein is Probable cell surface ferric reductase kap2 of Aspergillus oryzae (strain ATCC 42149 / RIB 40) (Yellow koji mold).